The following is a 566-amino-acid chain: Heat shock protein 70 homolog C57A7.12 (566 aa).

39–46 (AFNRDGKT) is a binding site for ATP. Phosphoserine occurs at positions 86 and 500.

The protein belongs to the heat shock protein 70 family.

The protein is Heat shock protein 70 homolog C57A7.12 of Schizosaccharomyces pombe (strain 972 / ATCC 24843) (Fission yeast).